We begin with the raw amino-acid sequence, 430 residues long: Trigger factor (430 aa).

In terms of domain architecture, PPIase FKBP-type spans Gly163–Pro248.

It belongs to the FKBP-type PPIase family. Tig subfamily.

The protein localises to the cytoplasm. The catalysed reaction is [protein]-peptidylproline (omega=180) = [protein]-peptidylproline (omega=0). Functionally, involved in protein export. Acts as a chaperone by maintaining the newly synthesized protein in an open conformation. Functions as a peptidyl-prolyl cis-trans isomerase. In Exiguobacterium sibiricum (strain DSM 17290 / CCUG 55495 / CIP 109462 / JCM 13490 / 255-15), this protein is Trigger factor.